Reading from the N-terminus, the 326-residue chain is MKTTILGAGSFGTAIAFALSSNSTSVNLWGRNHTDMQSIAINRKNLKYLPTCKLPENIIVSSNIDEVLSDYSTCIILAVPTQQLRTLCLSIQDKQHIFEKTPLLICSKGIENISLKFPSEIVKEILPNNPAFILSGPSFAKEIAEDLPCTIVLAGENESLGTSIAQKISNKTFKIIYSQDILGVQIGAALKNIIAIACGIVTGKNLGNNAIATVITKGMEEIKTLYAAKNQNINLSTLIGPSCLGDLILTCTTAHSRNMSFGITIGQGADINKMLNNNSKIIEGVSTVKPLISLAKELNIELPICTSIYNLLYKNIPLEKTISDIL.

S10, F11, R31, and K108 together coordinate NADPH. The sn-glycerol 3-phosphate site is built by K108, G136, and S138. Position 140 (A140) interacts with NADPH. The sn-glycerol 3-phosphate site is built by K191, D246, S256, R257, and N258. Residue K191 is the Proton acceptor of the active site. R257 is an NADPH binding site. NADPH-binding residues include I281 and E283.

It belongs to the NAD-dependent glycerol-3-phosphate dehydrogenase family.

The protein localises to the cytoplasm. It carries out the reaction sn-glycerol 3-phosphate + NAD(+) = dihydroxyacetone phosphate + NADH + H(+). The catalysed reaction is sn-glycerol 3-phosphate + NADP(+) = dihydroxyacetone phosphate + NADPH + H(+). Its pathway is membrane lipid metabolism; glycerophospholipid metabolism. Catalyzes the reduction of the glycolytic intermediate dihydroxyacetone phosphate (DHAP) to sn-glycerol 3-phosphate (G3P), the key precursor for phospholipid synthesis. The chain is Glycerol-3-phosphate dehydrogenase [NAD(P)+] from Ehrlichia chaffeensis (strain ATCC CRL-10679 / Arkansas).